A 244-amino-acid chain; its full sequence is Glutathione S-transferase theta-2 (244 aa).

Positions 2-82 (GLELFLDLVS…YLSCKYQTPD (81 aa)) constitute a GST N-terminal domain. Glutathione contacts are provided by residues 40–41 (HK), 53–54 (KL), 66–67 (ES), and 104–107 (DCIR). Positions 88–224 (DLQARARVHE…SILEQAAKKT (137 aa)) constitute a GST C-terminal domain.

The protein belongs to the GST superfamily. Theta family. As to quaternary structure, homodimer. Expressed at low levels in liver. In lung, expressed at low levels in ciliated bronchiolar cells, alveolar macrophages and alveolar type II cells.

Its subcellular location is the cytoplasm. It localises to the cytosol. The protein localises to the nucleus. It catalyses the reaction RX + glutathione = an S-substituted glutathione + a halide anion + H(+). Its function is as follows. Conjugation of reduced glutathione to a wide number of exogenous and endogenous hydrophobic electrophiles. Has a sulfatase activity. The sequence is that of Glutathione S-transferase theta-2 (GSTT2) from Homo sapiens (Human).